A 597-amino-acid chain; its full sequence is Aspartate--tRNA ligase (597 aa).

Position 173 (glutamate 173) interacts with L-aspartate. The aspartate stretch occupies residues 197-200; it reads QLFK. Arginine 219 serves as a coordination point for L-aspartate. ATP contacts are provided by residues 219–221 and glutamine 228; that span reads RDE. Histidine 449 provides a ligand contact to L-aspartate. Glutamate 483 lines the ATP pocket. Arginine 490 lines the L-aspartate pocket. 535 to 538 lines the ATP pocket; sequence GLDR.

It belongs to the class-II aminoacyl-tRNA synthetase family. Type 1 subfamily. In terms of assembly, homodimer.

It is found in the cytoplasm. It catalyses the reaction tRNA(Asp) + L-aspartate + ATP = L-aspartyl-tRNA(Asp) + AMP + diphosphate. Functionally, catalyzes the attachment of L-aspartate to tRNA(Asp) in a two-step reaction: L-aspartate is first activated by ATP to form Asp-AMP and then transferred to the acceptor end of tRNA(Asp). This is Aspartate--tRNA ligase from Shewanella pealeana (strain ATCC 700345 / ANG-SQ1).